The chain runs to 135 residues: Large ribosomal subunit protein eL32 (135 aa).

Belongs to the eukaryotic ribosomal protein eL32 family.

This Methanococcus maripaludis (strain C6 / ATCC BAA-1332) protein is Large ribosomal subunit protein eL32.